Reading from the N-terminus, the 368-residue chain is MGILEKVQPIEVMLPERYQTMSILEMEERVREIKEKMGALLFIPGHHYQKDEVVQFSDAAGDSLQLAQVAANNKEAKYIVFCGVHFMAETADMLTTDDQIVILPDMRAGCSMADMADIEQTERAWKELAKLFGDTMIPLTYVNSTAAIKAFCGRNGGATVTSSNAKQMVSWAFTQKERLVFLPDQHLGRNTAYDLGIPLEKMAVWNPHTDSLEYDGDIEEIQVILWKGHCSVHQNFTVKNIENVRKNHPDMNIIVHPECCYEVVAASDYAGSTKYIIDMIEAAPAGSKWAIGTEMNLVNRIIQQHPDKEIISLNPFMCPCLTMNRIDLPHLLWALENIERGEQINVIRVEKQVTEEAVLALNRMLERV.

His46 and Ser63 together coordinate iminosuccinate. Position 110 (Cys110) interacts with [4Fe-4S] cluster. Iminosuccinate is bound by residues Tyr141–Asn143 and Ser162. [4Fe-4S] cluster is bound at residue Cys230. Residues His256–Glu258 and Thr273 each bind iminosuccinate. Cys320 lines the [4Fe-4S] cluster pocket.

This sequence belongs to the quinolinate synthase family. Type 3 subfamily. It depends on [4Fe-4S] cluster as a cofactor.

It is found in the cytoplasm. The enzyme catalyses iminosuccinate + dihydroxyacetone phosphate = quinolinate + phosphate + 2 H2O + H(+). Its pathway is cofactor biosynthesis; NAD(+) biosynthesis; quinolinate from iminoaspartate: step 1/1. Catalyzes the condensation of iminoaspartate with dihydroxyacetone phosphate to form quinolinate. This Bacillus mycoides (strain KBAB4) (Bacillus weihenstephanensis) protein is Quinolinate synthase.